The chain runs to 174 residues: Transcription antitermination protein NusB (174 aa).

The interval 1–28 is disordered; the sequence is MVEPKKPFMRKPPPKTGDKKPGDRKANR. Residues 16–25 show a composition bias toward basic and acidic residues; sequence TGDKKPGDRK.

It belongs to the NusB family.

Functionally, involved in transcription antitermination. Required for transcription of ribosomal RNA (rRNA) genes. Binds specifically to the boxA antiterminator sequence of the ribosomal RNA (rrn) operons. In Rhodopseudomonas palustris (strain BisB5), this protein is Transcription antitermination protein NusB.